The primary structure comprises 112 residues: UPF0342 protein SSA_1465 (112 aa).

It belongs to the UPF0342 family.

This chain is UPF0342 protein SSA_1465, found in Streptococcus sanguinis (strain SK36).